The primary structure comprises 101 residues: Small ribosomal subunit protein bS6 (101 aa).

Belongs to the bacterial ribosomal protein bS6 family.

In terms of biological role, binds together with bS18 to 16S ribosomal RNA. This chain is Small ribosomal subunit protein bS6, found in Paenarthrobacter aurescens (strain TC1).